A 137-amino-acid chain; its full sequence is Large-conductance mechanosensitive channel (137 aa).

Helical transmembrane passes span 15–35, 38–58, and 80–100; these read IDLA…NSIV, IFMP…MFIQ, and GNFI…FLFV.

This sequence belongs to the MscL family. As to quaternary structure, homopentamer.

It is found in the cell inner membrane. Channel that opens in response to stretch forces in the membrane lipid bilayer. May participate in the regulation of osmotic pressure changes within the cell. The polypeptide is Large-conductance mechanosensitive channel (Bartonella henselae (strain ATCC 49882 / DSM 28221 / CCUG 30454 / Houston 1) (Rochalimaea henselae)).